A 141-amino-acid chain; its full sequence is Large ribosomal subunit protein uL11 (141 aa).

This sequence belongs to the universal ribosomal protein uL11 family. Part of the ribosomal stalk of the 50S ribosomal subunit. Interacts with L10 and the large rRNA to form the base of the stalk. L10 forms an elongated spine to which L12 dimers bind in a sequential fashion forming a multimeric L10(L12)X complex. One or more lysine residues are methylated.

Functionally, forms part of the ribosomal stalk which helps the ribosome interact with GTP-bound translation factors. The polypeptide is Large ribosomal subunit protein uL11 (Lactobacillus johnsonii (strain CNCM I-12250 / La1 / NCC 533)).